Reading from the N-terminus, the 545-residue chain is 4-coumarate--CoA ligase 1 (545 aa).

Serine 192, serine 193, glycine 194, threonine 195, threonine 196, and lysine 200 together coordinate ATP. 2 residues coordinate (E)-4-coumaroyl-AMP: tyrosine 242 and serine 246. Lysine 263 serves as a coordination point for CoA. Residues 265 to 334 (DIAQFLELIP…AKFPNAKLGQ (70 aa)) form an SBD1 region. (E)-4-coumaroyl-AMP is bound by residues alanine 312, glutamine 334, glycine 335, threonine 339, and methionine 347. Glutamine 334, glycine 335, and threonine 339 together coordinate ATP. Positions 335–402 (GYGMTEAGPV…IRGDQIMKGY (68 aa)) are SBD2. 2 residues coordinate ATP: aspartate 423 and arginine 438. 2 residues coordinate (E)-4-coumaroyl-AMP: lysine 440 and lysine 444. CoA is bound by residues lysine 446 and glycine 447. Lysine 529 is a binding site for ATP.

Belongs to the ATP-dependent AMP-binding enzyme family. Requires Mg(2+) as cofactor.

The catalysed reaction is (E)-4-coumarate + ATP + CoA = (E)-4-coumaroyl-CoA + AMP + diphosphate. It catalyses the reaction (E)-4-coumarate + ATP + H(+) = (E)-4-coumaroyl-AMP + diphosphate. It carries out the reaction (E)-4-coumaroyl-AMP + CoA = (E)-4-coumaroyl-CoA + AMP + H(+). It participates in phytoalexin biosynthesis; 3,4',5-trihydroxystilbene biosynthesis; 3,4',5-trihydroxystilbene from trans-4-coumarate: step 1/2. Carboxylate--CoA ligase that may use 4-coumarate as substrate. Follows a two-step reaction mechanism, wherein the carboxylate substrate first undergoes adenylation by ATP, followed by a thioesterification in the presence of CoA to yield the final CoA thioester. This chain is 4-coumarate--CoA ligase 1 (4CL1), found in Solanum tuberosum (Potato).